The chain runs to 545 residues: CTP synthase (545 aa).

Residues 1–266 (MTTNYIFVTG…DDYICKRFSL (266 aa)) form an amidoligase domain region. A CTP-binding site is contributed by serine 14. Serine 14 serves as a coordination point for UTP. ATP contacts are provided by residues 15-20 (SLGKGI) and aspartate 72. 2 residues coordinate Mg(2+): aspartate 72 and glutamate 140. CTP is bound by residues 147 to 149 (DIE), 187 to 192 (KTKPTQ), and lysine 223. UTP contacts are provided by residues 187–192 (KTKPTQ) and lysine 223. 239–241 (KDV) serves as a coordination point for ATP. The region spanning 291–542 (TIGMIGKYVE…VKAAGDYQKR (252 aa)) is the Glutamine amidotransferase type-1 domain. L-glutamine is bound at residue glycine 352. Cysteine 379 acts as the Nucleophile; for glutamine hydrolysis in catalysis. Residues 380–383 (LGMQ), glutamate 403, and arginine 470 contribute to the L-glutamine site. Residues histidine 515 and glutamate 517 contribute to the active site.

The protein belongs to the CTP synthase family. In terms of assembly, homotetramer.

It carries out the reaction UTP + L-glutamine + ATP + H2O = CTP + L-glutamate + ADP + phosphate + 2 H(+). The enzyme catalyses L-glutamine + H2O = L-glutamate + NH4(+). It catalyses the reaction UTP + NH4(+) + ATP = CTP + ADP + phosphate + 2 H(+). Its pathway is pyrimidine metabolism; CTP biosynthesis via de novo pathway; CTP from UDP: step 2/2. Allosterically activated by GTP, when glutamine is the substrate; GTP has no effect on the reaction when ammonia is the substrate. The allosteric effector GTP functions by stabilizing the protein conformation that binds the tetrahedral intermediate(s) formed during glutamine hydrolysis. Inhibited by the product CTP, via allosteric rather than competitive inhibition. In terms of biological role, catalyzes the ATP-dependent amination of UTP to CTP with either L-glutamine or ammonia as the source of nitrogen. Regulates intracellular CTP levels through interactions with the four ribonucleotide triphosphates. The protein is CTP synthase of Yersinia pseudotuberculosis serotype O:1b (strain IP 31758).